The primary structure comprises 99 residues: Putative septation protein SpoVG (99 aa).

It belongs to the SpoVG family.

Could be involved in septation. This Myxococcus xanthus (strain DK1622) protein is Putative septation protein SpoVG.